The primary structure comprises 262 residues: tRNA pseudouridine synthase A (262 aa).

D51 (nucleophile) is an active-site residue. Residue Y109 coordinates substrate.

Belongs to the tRNA pseudouridine synthase TruA family. In terms of assembly, homodimer.

The catalysed reaction is uridine(38/39/40) in tRNA = pseudouridine(38/39/40) in tRNA. In terms of biological role, formation of pseudouridine at positions 38, 39 and 40 in the anticodon stem and loop of transfer RNAs. The sequence is that of tRNA pseudouridine synthase A from Actinobacillus pleuropneumoniae serotype 5b (strain L20).